Consider the following 92-residue polypeptide: NELL2-interacting cell ontogeny regulator 1 (92 aa).

An N-terminal signal peptide occupies residues 1-30 (MALPSAWSVMRVVIPFISVLGLLGVRLVGA).

This sequence belongs to the NICOL family.

Its subcellular location is the secreted. It localises to the cytoplasm. It is found in the perinuclear region. In terms of biological role, mRNA-binding protein which interacts with a range of target mRNAs and may promote extracellular matrix production. May function as a component of lumicrine signaling and may play a crucial role in epididymal-mediated sperm maturation and male fertility. This is NELL2-interacting cell ontogeny regulator 1 from Gallus gallus (Chicken).